The chain runs to 188 residues: Putative ankyrin repeat protein FPV230 (188 aa).

ANK repeat units follow at residues 2–31 (ENEL…NPNA), 36–65 (KYMI…DANV), 135–164 (LGST…DINI), and 168–187 (NNNT…YLKC).

This is Putative ankyrin repeat protein FPV230 from Vertebrata (FPV).